The chain runs to 469 residues: E3 ubiquitin-protein ligase TRAIP (469 aa).

An RING-type zinc finger spans residues 7 to 50 (CTICSDFFDHSRDVAAIHCGHTFHLQCLIQWFETAPSRTCPQCR). 2 coiled-coil regions span residues 70–177 (EENV…QSQR) and 201–280 (CVSL…TLNL). Positions 211-469 (LKEARKASGE…QAKLDTFLWS (259 aa)) are interaction with CYLD. Lysine 304 participates in a covalent cross-link: Glycyl lysine isopeptide (Lys-Gly) (interchain with G-Cter in SUMO2). The PIP-box signature appears at 460 to 469 (QAKLDTFLWS).

The protein belongs to the TRAIP family. As to quaternary structure, interacts (via PIP-box) with PCNA. Binds TRAF1, TRAF2, TRAF3, TRAF5 and TRAF6 is part of the receptor-TRAF signaling complex. May interact with CYLD; the C-terminus interacts with CYLD, however the interaction was not detected with the full-length protein. Interacts with POLK and POLN. Interacts with UIMC1. In terms of processing, sumoylated; sumoylation is required for nuclear localization. Sumoylation increases protein stability, possibly by preventing ubiquitination. Post-translationally, autoubiquitinated.

It is found in the nucleus. The protein localises to the nucleoplasm. It localises to the nucleolus. The protein resides in the chromosome. Its subcellular location is the cytoplasm. It is found in the perinuclear region. It carries out the reaction S-ubiquitinyl-[E2 ubiquitin-conjugating enzyme]-L-cysteine + [acceptor protein]-L-lysine = [E2 ubiquitin-conjugating enzyme]-L-cysteine + N(6)-ubiquitinyl-[acceptor protein]-L-lysine.. Its pathway is protein modification; protein ubiquitination. E3 ubiquitin ligase required to protect genome stability in response to replication stress. Acts as a key regulator of interstrand cross-link repair, which takes place when both strands of duplex DNA are covalently tethered together, thereby blocking replication and transcription. Controls the choice between the two pathways of replication-coupled interstrand-cross-link repair by mediating ubiquitination of MCM7 subunit of the CMG helicase complex. Short ubiquitin chains on MCM7 promote recruitment of DNA glycosylase NEIL3. If the interstrand cross-link cannot be cleaved by NEIL3, the ubiquitin chains continue to grow on MCM7, promoting the unloading of the CMG helicase complex by the VCP/p97 ATPase, enabling the Fanconi anemia DNA repair pathway. Only catalyzes ubiquitination of MCM7 when forks converge. Also involved in the repair of covalent DNA-protein cross-links (DPCs) during DNA synthesis: promotes ubiquitination of DPCs, leading to their degradation by the proteasome. Has also been proposed to play a role in promoting translesion synthesis by mediating the assembly of 'Lys-63'-linked poly-ubiquitin chains on the Y-family polymerase POLN in order to facilitate bypass of DNA lesions and preserve genomic integrity. The function in translesion synthesis is however controversial. Acts as a regulator of the spindle assembly checkpoint. Also acts as a negative regulator of innate immune signaling by inhibiting activation of NF-kappa-B mediated by TNF. Negatively regulates TLR3/4- and RIG-I-mediated IRF3 activation and subsequent IFNB1 production and cellular antiviral response by promoting 'Lys-48'-linked polyubiquitination of TNK1 leading to its proteasomal degradation. This is E3 ubiquitin-protein ligase TRAIP from Homo sapiens (Human).